The primary structure comprises 315 residues: MGTSEDKMPFKTTKPTSSAQEVPPTPYPDWQNSMQAYYGGGGTPNPFFPSPVGSPSPHPYMWGAQHHMMPPYGTPVPYPAMYPPGAVYAHPSMPMPPNSGPTNKEPAKDQASGKKSKGNSKKKAEGGDKALSGSGNDGASHSDESVTAGSSDENDENANQQEQGSIRKPSFGQMLADASSQSTTGEIQGSVPMKPVAPGTNLNIGMDLWSSQAGVPVKDERELKRQKRKQSNRESARRSRLRKQAECEQLQQRVESLSNENQSLRDELQRLSSECDKLKSENNSIQDELQRVLGAEAVANLEQNAAGSKDGEGTN.

Disordered regions lie at residues 1 to 56 and 93 to 268; these read MGTS…GSPS and MPMP…RDEL. Residues 46–56 show a composition bias toward pro residues; that stretch reads PFFPSPVGSPS. Polar residues-rich tracts occupy residues 133-164 and 178-187; these read GSGNDGASHSDESVTAGSSDENDENANQQEQG and ASSQSTTGEI. In terms of domain architecture, bZIP spans 222–285; sequence ELKRQKRKQS…DKLKSENNSI (64 aa). The interval 224–243 is basic motif; sequence KRQKRKQSNRESARRSRLRK. Residues 249–262 show a composition bias toward polar residues; the sequence is QLQQRVESLSNENQ. Residues 250-285 are leucine-zipper; the sequence is LQQRVESLSNENQSLRDELQRLSSECDKLKSENNSI.

This sequence belongs to the bZIP family. As to quaternary structure, monomer and heterodimers with BZIP16 and BZIP68. Interacts with GIP1. In terms of processing, phosphorylated by CK2. In terms of tissue distribution, found in both light and dark grown leaves.

The protein resides in the nucleus. Binds to the G-box motif (5'-CCACGTGG-3') of the rbcS-1A gene promoter. G-box and G-box-like motifs are cis-acting elements defined in promoters of certain plant genes which are regulated by such diverse stimuli as light-induction or hormone control. Binds to the G-box motif 5'-CACGTG-3' of LHCB2.4 (At3g27690) promoter. May act as transcriptional activator in light-regulated expression of LHCB2.4. Probably binds DNA as monomer. DNA-binding activity is redox-dependent. The polypeptide is G-box-binding factor 1 (GBF1) (Arabidopsis thaliana (Mouse-ear cress)).